The primary structure comprises 316 residues: Cobalamin biosynthesis protein CobD (316 aa).

5 consecutive transmembrane segments (helical) span residues 45–65 (FSPY…ALGV), 78–100 (PVLY…SLAF), 151–171 (DGVI…AMTY), 209–229 (LTWL…KGAL), and 291–311 (ISLL…FYLV).

It belongs to the CobD/CbiB family.

Its subcellular location is the cell membrane. It participates in cofactor biosynthesis; adenosylcobalamin biosynthesis. In terms of biological role, converts cobyric acid to cobinamide by the addition of aminopropanol on the F carboxylic group. The protein is Cobalamin biosynthesis protein CobD of Streptococcus sanguinis (strain SK36).